The chain runs to 327 residues: Methionyl-tRNA formyltransferase (327 aa).

121-124 (SLLP) contacts (6S)-5,6,7,8-tetrahydrofolate.

The protein belongs to the Fmt family.

The enzyme catalyses L-methionyl-tRNA(fMet) + (6R)-10-formyltetrahydrofolate = N-formyl-L-methionyl-tRNA(fMet) + (6S)-5,6,7,8-tetrahydrofolate + H(+). Its function is as follows. Attaches a formyl group to the free amino group of methionyl-tRNA(fMet). The formyl group appears to play a dual role in the initiator identity of N-formylmethionyl-tRNA by promoting its recognition by IF2 and preventing the misappropriation of this tRNA by the elongation apparatus. This Burkholderia pseudomallei (strain 668) protein is Methionyl-tRNA formyltransferase.